The sequence spans 977 residues: Ephrin type-A receptor 1 (977 aa).

The N-terminal stretch at 1-26 (MERRWPLGLALLLLLLCAPLPPGARA) is a signal peptide. Residues 27 to 548 (EEVTLMDTST…PVSRSLTGGE (522 aa)) lie on the Extracellular side of the membrane. An Eph LBD domain is found at 28 to 210 (EVTLMDTSTA…FYQRCAETVH (183 aa)). Fibronectin type-III domains lie at 333-446 (PPSA…MGHA) and 448-539 (SLSG…TSPP). Asparagine 415 and asparagine 479 each carry an N-linked (GlcNAc...) asparagine glycan. A helical membrane pass occupies residues 549–569 (IVAVIFGLLLGIALLIGIYVF). The Cytoplasmic segment spans residues 570–977 (RSRRGQRQRQ…ILCSIQGFKD (408 aa)). 2 positions are modified to phosphotyrosine; by autocatalysis: tyrosine 600 and tyrosine 606. One can recognise a Protein kinase domain in the interval 625–885 (LIVDTVIGEG…QLQAHLEQLL (261 aa)). Residues 631 to 639 (IGEGEFGEV) and lysine 657 contribute to the ATP site. Aspartate 750 acts as the Proton acceptor in catalysis. The residue at position 782 (tyrosine 782) is a Phosphotyrosine; by autocatalysis. Phosphoserine occurs at positions 907 and 911. In terms of domain architecture, SAM spans 914 to 977 (IPYRSVSEWL…ILCSIQGFKD (64 aa)). A PDZ-binding motif is present at residues 975 to 977 (FKD).

It belongs to the protein kinase superfamily. Tyr protein kinase family. Ephrin receptor subfamily. Homodimer. Forms a signaling complex with LCK; PTK2B/PYK2 and PI3-kinase upon activation by EFNA1; regulates T-lymphocytes migration. Interacts (via SAM domain) with ILK (via ANK repeats); stimulated by EFNA1 but independent of the kinase activity of EPHA1. Interacts (kinase activity-dependent) with PTK2/FAK1. In terms of processing, phosphorylated. Autophosphorylation is stimulated by its ligand EFNA1. Ubiquitinated. Preferentially expressed in epithelial cells including skin, kidney, liver and thymus. Expressed in myogenic progenitor cells.

Its subcellular location is the cell membrane. The catalysed reaction is L-tyrosyl-[protein] + ATP = O-phospho-L-tyrosyl-[protein] + ADP + H(+). Receptor tyrosine kinase which binds promiscuously membrane-bound ephrin-A family ligands residing on adjacent cells, leading to contact-dependent bidirectional signaling into neighboring cells. The signaling pathway downstream of the receptor is referred to as forward signaling while the signaling pathway downstream of the ephrin ligand is referred to as reverse signaling. Binds with a low affinity EFNA3 and EFNA4 and with a high affinity to EFNA1 which most probably constitutes its cognate/functional ligand. Upon activation by EFNA1 induces cell attachment to the extracellular matrix inhibiting cell spreading and motility through regulation of ILK and downstream RHOA and RAC. Also plays a role in angiogenesis and regulates cell proliferation. May play a role in apoptosis. This chain is Ephrin type-A receptor 1 (Epha1), found in Mus musculus (Mouse).